Consider the following 245-residue polypeptide: 1-(5-phosphoribosyl)-5-[(5-phosphoribosylamino)methylideneamino] imidazole-4-carboxamide isomerase (245 aa).

Residue Asp7 is the Proton acceptor of the active site. Residue Asp129 is the Proton donor of the active site.

The protein belongs to the HisA/HisF family.

The protein resides in the cytoplasm. The catalysed reaction is 1-(5-phospho-beta-D-ribosyl)-5-[(5-phospho-beta-D-ribosylamino)methylideneamino]imidazole-4-carboxamide = 5-[(5-phospho-1-deoxy-D-ribulos-1-ylimino)methylamino]-1-(5-phospho-beta-D-ribosyl)imidazole-4-carboxamide. It participates in amino-acid biosynthesis; L-histidine biosynthesis; L-histidine from 5-phospho-alpha-D-ribose 1-diphosphate: step 4/9. This Shewanella baltica (strain OS223) protein is 1-(5-phosphoribosyl)-5-[(5-phosphoribosylamino)methylideneamino] imidazole-4-carboxamide isomerase.